Reading from the N-terminus, the 290-residue chain is 4-hydroxybenzoate octaprenyltransferase (290 aa).

7 consecutive transmembrane segments (helical) span residues 33 to 53 (LWALWVATPGVPPLWILAVFV), 99 to 119 (LFVVLVLLAFLLVLTLNTMTI), 141 to 161 (LPQVVLGAAFGWSIPMAFAAV), 163 to 183 (ESVPLSCWLMFLANILWAVAY), 213 to 233 (FIIGVLQIGVMVLMALIGWLN), 237 to 257 (WGYYWSILVAGGLFVYQQKLI), and 268 to 288 (AFMNNNYVGLVLFLGLAMSYW).

The protein belongs to the UbiA prenyltransferase family. Mg(2+) serves as cofactor.

The protein localises to the cell inner membrane. It catalyses the reaction all-trans-octaprenyl diphosphate + 4-hydroxybenzoate = 4-hydroxy-3-(all-trans-octaprenyl)benzoate + diphosphate. The protein operates within cofactor biosynthesis; ubiquinone biosynthesis. Catalyzes the prenylation of para-hydroxybenzoate (PHB) with an all-trans polyprenyl group. Mediates the second step in the final reaction sequence of ubiquinone-8 (UQ-8) biosynthesis, which is the condensation of the polyisoprenoid side chain with PHB, generating the first membrane-bound Q intermediate 3-octaprenyl-4-hydroxybenzoate. This is 4-hydroxybenzoate octaprenyltransferase from Escherichia fergusonii (strain ATCC 35469 / DSM 13698 / CCUG 18766 / IAM 14443 / JCM 21226 / LMG 7866 / NBRC 102419 / NCTC 12128 / CDC 0568-73).